A 117-amino-acid polypeptide reads, in one-letter code: Large ribosomal subunit protein uL18 (117 aa).

This sequence belongs to the universal ribosomal protein uL18 family. Part of the 50S ribosomal subunit; part of the 5S rRNA/L5/L18/L25 subcomplex. Contacts the 5S and 23S rRNAs.

In terms of biological role, this is one of the proteins that bind and probably mediate the attachment of the 5S RNA into the large ribosomal subunit, where it forms part of the central protuberance. The protein is Large ribosomal subunit protein uL18 of Aster yellows witches'-broom phytoplasma (strain AYWB).